Reading from the N-terminus, the 948-residue chain is Non-lysosomal glucosylceramidase (948 aa).

The Extracellular portion of the chain corresponds to 1-736 (MAEPLAVETK…VMDGPSAYCS (736 aa)). A compositionally biased stretch (basic and acidic residues) spans 177-195 (STRDKTSDPDGDPDGERTK). Positions 177–197 (STRDKTSDPDGDPDGERTKCQ) are disordered. N-linked (GlcNAc...) asparagine glycosylation occurs at N200. At S214 the chain carries Phosphoserine. N-linked (GlcNAc...) asparagine glycans are attached at residues N288, N555, and N629. Phosphoserine is present on residues S667 and S669. Residue N673 is glycosylated (N-linked (GlcNAc...) asparagine). The helical transmembrane segment at 737 to 753 (GLWLAALQAMSAMATIL) threads the bilayer. Residues 754-948 (DQPNDCLRYQ…ALERRRAQRD (195 aa)) lie on the Cytoplasmic side of the membrane.

It belongs to the non-lysosomal glucosylceramidase family.

The protein localises to the cell membrane. The catalysed reaction is a beta-D-glucosyl-(1&lt;-&gt;1')-N-acylsphing-4-enine + H2O = an N-acylsphing-4-enine + D-glucose. In terms of biological role, non-lysosomal glucosylceramidase that catalyzes the conversion of glucosylceramide to free glucose and ceramide. The sequence is that of Non-lysosomal glucosylceramidase from Drosophila melanogaster (Fruit fly).